Here is a 292-residue protein sequence, read N- to C-terminus: tRNA dimethylallyltransferase (292 aa).

10–17 (GPTASGKS) serves as a coordination point for ATP. A substrate-binding site is contributed by 12 to 17 (TASGKS). Interaction with substrate tRNA stretches follow at residues 35-38 (DSMQ) and 159-163 (QRIVR).

It belongs to the IPP transferase family. In terms of assembly, monomer. It depends on Mg(2+) as a cofactor.

The catalysed reaction is adenosine(37) in tRNA + dimethylallyl diphosphate = N(6)-dimethylallyladenosine(37) in tRNA + diphosphate. Functionally, catalyzes the transfer of a dimethylallyl group onto the adenine at position 37 in tRNAs that read codons beginning with uridine, leading to the formation of N6-(dimethylallyl)adenosine (i(6)A). The chain is tRNA dimethylallyltransferase from Chelativorans sp. (strain BNC1).